The chain runs to 471 residues: Delta(24(24(1)))-sterol reductase erg4A (471 aa).

The N-linked (GlcNAc...) asparagine glycan is linked to Asn-15. Helical transmembrane passes span 33–53 (VTLI…GAVL), 89–109 (WTIY…LPGV), 130–150 (AVSS…TGVL), 159–179 (FGPL…VAYI), 216–236 (MFFE…GTAL), 244–264 (LVAG…NACA), 282–302 (GFML…HCTL), and 313–333 (HWNP…YWVW). Residues Lys-340, Arg-344, Leu-380, and 392–393 (HY) contribute to the NADP(+) site. The chain crosses the membrane as a helical span at residues 397–417 (VFFAISWGLITGFNSPFPWFY). NADP(+) is bound by residues Asp-432, 436 to 440 (CRERY), and Tyr-447.

The protein belongs to the ERG4/ERG24 family.

Its subcellular location is the endoplasmic reticulum membrane. It carries out the reaction ergosterol + NADP(+) = ergosta-5,7,22,24(28)-tetraen-3beta-ol + NADPH + H(+). It participates in steroid metabolism; ergosterol biosynthesis. Delta(24(24(1)))-sterol reductase; part of the third module of ergosterol biosynthesis pathway that includes the late steps of the pathway. Catalyzes the last step of ergosterol biosynthesis by converting ergosta-5,7,22,24(28)-tetraen-3beta-ol into ergosterol. The third module or late pathway involves the ergosterol synthesis itself through consecutive reactions that mainly occur in the endoplasmic reticulum (ER) membrane. Firstly, the squalene synthase erg9 catalyzes the condensation of 2 farnesyl pyrophosphate moieties to form squalene, which is the precursor of all steroids. Squalene synthase is crucial for balancing the incorporation of farnesyl diphosphate (FPP) into sterol and nonsterol isoprene synthesis. Secondly, squalene is converted into lanosterol by the consecutive action of the squalene epoxidase erg1 and the lanosterol synthase erg7. Then, the delta(24)-sterol C-methyltransferase erg6 methylates lanosterol at C-24 to produce eburicol. Eburicol is the substrate of the sterol 14-alpha demethylase encoded by cyp51A and cyp51B, to yield 4,4,24-trimethyl ergosta-8,14,24(28)-trienol. The C-14 reductase erg24 then reduces the C14=C15 double bond which leads to 4,4-dimethylfecosterol. A sequence of further demethylations at C-4, involving the C-4 demethylation complex containing the C-4 methylsterol oxidases erg25A or erg25B, the sterol-4-alpha-carboxylate 3-dehydrogenase erg26 and the 3-keto-steroid reductase erg27, leads to the production of fecosterol via 4-methylfecosterol. The C-8 sterol isomerase erg2 then catalyzes the reaction which results in unsaturation at C-7 in the B ring of sterols and thus converts fecosterol to episterol. The sterol-C5-desaturase erg3B then catalyzes the introduction of a C-5 double bond in the B ring to produce 5-dehydroepisterol. The 2 other sterol-C5-desaturases, erg3A and erg3C, seem to be less important in ergosterol biosynthesis. The C-22 sterol desaturase erg5 further converts 5-dehydroepisterol into ergosta-5,7,22,24(28)-tetraen-3beta-ol by forming the C-22(23) double bond in the sterol side chain. Finally, ergosta-5,7,22,24(28)-tetraen-3beta-ol is substrate of the C-24(28) sterol reductases erg4A and erg4B to produce ergosterol. Possible alternative sterol biosynthetic pathways might exist from fecosterol to ergosterol, depending on the activities of the erg3 isoforms. The protein is Delta(24(24(1)))-sterol reductase erg4A of Aspergillus fumigatus (strain ATCC MYA-4609 / CBS 101355 / FGSC A1100 / Af293) (Neosartorya fumigata).